A 540-amino-acid chain; its full sequence is Signal peptide peptidase-like 2 (540 aa).

Residues 1–27 form the signal peptide; the sequence is MDSLRFLRILLLSSSILLLSLRSTVTA. The Lumenal segment spans residues 28-196; sequence GDIVHQDNLA…PRRPAVDVAE (169 aa). Asn-83 carries an N-linked (GlcNAc...) asparagine glycan. Residues 95-173 form the PA domain; it reads SCTPLKNKLS…QDAGASLQKM (79 aa). N-linked (GlcNAc...) asparagine glycosylation is present at Asn-176. A helical membrane pass occupies residues 197–217; it reads VFLWLMAIGTILCASYWSAWS. Over 218 to 248 the chain is Cytoplasmic; that stretch reads AREAAIEHDKLLKDAIDEIPNTNDGGSGVVE. The helical transmembrane segment at 249–269 threads the bilayer; that stretch reads INSISAIFFVVLASGFLVILY. The Lumenal portion of the chain corresponds to 270-278; the sequence is KLMSYWFVE. A helical transmembrane segment spans residues 279–299; it reads LLVVVFCIGGVEGLQTCLVAL. Residues 300–319 are Cytoplasmic-facing; that stretch reads LSRWFQRAADTYVKVPFLGP. A helical membrane pass occupies residues 320–340; that stretch reads ISYLTLAVSPFCIVFAVLWAV. The Lumenal segment spans residues 341-345; that stretch reads YRVHS. A helical transmembrane segment spans residues 346–366; it reads FAWIGQDVLGIALIITVLQIV. Residues 367–370 are Cytoplasmic-facing; the sequence is HVPN. Residues 371–391 form a helical membrane-spanning segment; sequence LKVGTVLLSCAFLYDIFWVFV. Residue Asp-385 is part of the active site. The Lumenal portion of the chain corresponds to 392–429; that stretch reads SKKLFHESVMIVVARGDKSGEDGIPMLLKIPRMFDPWG. Residues 430 to 450 traverse the membrane as a helical segment; that stretch reads GYSIIGFGDILLPGLLIAFAL. Asp-438 is an active-site residue. Topologically, residues 451–462 are cytoplasmic; that stretch reads RYDWLANKTLRT. A helical transmembrane segment spans residues 463–483; the sequence is GYFIWAMVAYGLGLLITYVAL. Residues 484 to 488 are Lumenal-facing; the sequence is NLMDG. The chain crosses the membrane as a helical span at residues 489–509; it reads HGQPALLYIVPFTLGTMLTLA. The short motif at 492-494 is the PAL element; it reads PAL. At 510 to 540 the chain is on the cytoplasmic side; sequence RKRDDLWILWTKGEPERACPHHVRLEQCSEK.

It belongs to the peptidase A22B family. Post-translationally, glycosylated. In terms of tissue distribution, ubiquitous.

Its subcellular location is the endosome membrane. Its function is as follows. Intramembrane-cleaving aspartic protease (I-CLiP) that cleaves type II membrane signal peptides in the hydrophobic plane of the membrane. This is Signal peptide peptidase-like 2 (SPPL2) from Arabidopsis thaliana (Mouse-ear cress).